A 313-amino-acid polypeptide reads, in one-letter code: Ribose-phosphate pyrophosphokinase (313 aa).

ATP-binding positions include 40–42 (DGE) and 98–99 (RQ). Mg(2+) is bound by residues His-132 and Asp-172. Lys-195 is a catalytic residue. Residues Arg-197, Asp-221, and 225 to 229 (DTAGT) contribute to the D-ribose 5-phosphate site.

The protein belongs to the ribose-phosphate pyrophosphokinase family. Class I subfamily. In terms of assembly, homohexamer. Requires Mg(2+) as cofactor.

It localises to the cytoplasm. The enzyme catalyses D-ribose 5-phosphate + ATP = 5-phospho-alpha-D-ribose 1-diphosphate + AMP + H(+). It functions in the pathway metabolic intermediate biosynthesis; 5-phospho-alpha-D-ribose 1-diphosphate biosynthesis; 5-phospho-alpha-D-ribose 1-diphosphate from D-ribose 5-phosphate (route I): step 1/1. Functionally, involved in the biosynthesis of the central metabolite phospho-alpha-D-ribosyl-1-pyrophosphate (PRPP) via the transfer of pyrophosphoryl group from ATP to 1-hydroxyl of ribose-5-phosphate (Rib-5-P). The protein is Ribose-phosphate pyrophosphokinase of Porphyromonas gingivalis (strain ATCC BAA-308 / W83).